The chain runs to 462 residues: Glutamate--tRNA ligase 1 (462 aa).

Positions 8 to 18 (PSPTGYLHIGG) match the 'HIGH' region motif. The short motif at 237–241 (KLSKR) is the 'KMSKS' region element. Lys-240 contributes to the ATP binding site.

This sequence belongs to the class-I aminoacyl-tRNA synthetase family. Glutamate--tRNA ligase type 1 subfamily. As to quaternary structure, monomer.

It localises to the cytoplasm. The enzyme catalyses tRNA(Glu) + L-glutamate + ATP = L-glutamyl-tRNA(Glu) + AMP + diphosphate. In terms of biological role, catalyzes the attachment of glutamate to tRNA(Glu) in a two-step reaction: glutamate is first activated by ATP to form Glu-AMP and then transferred to the acceptor end of tRNA(Glu). In Sulfurimonas denitrificans (strain ATCC 33889 / DSM 1251) (Thiomicrospira denitrificans (strain ATCC 33889 / DSM 1251)), this protein is Glutamate--tRNA ligase 1.